The chain runs to 1159 residues: WASH complex subunit 5 (1159 aa).

The protein belongs to the strumpellin family. Component of the WASH complex.

It localises to the early endosome. Acts at least in part as component of the WASH complex which seems to regulate washc1 nucleation-promoting factor (NPF) activity and is required for its membrane targeting during endosomal sorting. This chain is WASH complex subunit 5, found in Danio rerio (Zebrafish).